Reading from the N-terminus, the 217-residue chain is GRB2-related adapter protein (217 aa).

Residues 1–58 (MESVALYSFQATESDELAFNKGDTLKILNMEDDQNWYKAELRGAEGFVPKNYIRLKPH) enclose the SH3 1 domain. The SH2 domain occupies 60 to 152 (WYSGRISRQL…KRQVFLQDEE (93 aa)). One can recognise an SH3 2 domain in the interval 158 to 217 (PRACFAQAQFDFSAQDPSQLSFRRGDIIEVLERLDPSWWRGRLSGRIGFFPRSYVQPVHM).

This sequence belongs to the GRB2/sem-5/DRK family. As to quaternary structure, associates through its SH2 domain with ligand-activated receptors for stem cell factor (KIT) and erythropoietin (EPOR). Also forms a stable complex with the Bcr-Abl oncoprotein. GRAP is associated with the Ras guanine nucleotide exchange factor SOS1, primarily through its N-terminal SH3 domain. Interacts with phosphorylated LAT upon TCR activation. Interacts with SHB.

The protein localises to the membrane. The protein resides in the synapse. Its function is as follows. Couples signals from receptor and cytoplasmic tyrosine kinases to the Ras signaling pathway. Plays a role in the inner ear and in hearing. This Bos taurus (Bovine) protein is GRB2-related adapter protein (GRAP).